We begin with the raw amino-acid sequence, 699 residues long: Polyribonucleotide nucleotidyltransferase (699 aa).

Asp-484 and Asp-490 together coordinate Mg(2+). Residues 551–610 form the KH domain; the sequence is PRITTIQVKPDQVRTVIGPGGKNVRGIIEATGCAIDIEDDGRINIASADGDACKAAIKMI. One can recognise an S1 motif domain in the interval 620–688; the sequence is GKLYMATVKK…RQGKIKLSRK (69 aa).

The protein belongs to the polyribonucleotide nucleotidyltransferase family. Mg(2+) is required as a cofactor.

It localises to the cytoplasm. The catalysed reaction is RNA(n+1) + phosphate = RNA(n) + a ribonucleoside 5'-diphosphate. In terms of biological role, involved in mRNA degradation. Catalyzes the phosphorolysis of single-stranded polyribonucleotides processively in the 3'- to 5'-direction. In Syntrophotalea carbinolica (strain DSM 2380 / NBRC 103641 / GraBd1) (Pelobacter carbinolicus), this protein is Polyribonucleotide nucleotidyltransferase.